A 141-amino-acid polypeptide reads, in one-letter code: 3-hydroxyacyl-[acyl-carrier-protein] dehydratase FabZ (141 aa).

H49 is a catalytic residue.

The protein belongs to the thioester dehydratase family. FabZ subfamily.

The protein localises to the cytoplasm. It catalyses the reaction a (3R)-hydroxyacyl-[ACP] = a (2E)-enoyl-[ACP] + H2O. Involved in unsaturated fatty acids biosynthesis. Catalyzes the dehydration of short chain beta-hydroxyacyl-ACPs and long chain saturated and unsaturated beta-hydroxyacyl-ACPs. This Enterococcus faecalis (strain ATCC 700802 / V583) protein is 3-hydroxyacyl-[acyl-carrier-protein] dehydratase FabZ (fabZ2).